A 287-amino-acid chain; its full sequence is Pol-RFamide neuropeptides (287 aa).

Positions methionine 1–alanine 21 are cleaved as a signal peptide. Positions aspartate 22 to aspartate 52 are excised as a propeptide. The residue at position 53 (glutamine 53) is a Pyrrolidone carboxylic acid. Phenylalanine 59 is modified (phenylalanine amide). Residues glutamate 62–asparagine 64 constitute a propeptide that is removed on maturation. Glutamine 65 bears the Pyrrolidone carboxylic acid mark. A Phenylalanine amide modification is found at phenylalanine 71. The propeptide occupies glutamate 74–aspartate 77. Glutamine 78 is subject to Pyrrolidone carboxylic acid. Position 84 is a phenylalanine amide (phenylalanine 84). A propeptide spanning residues glutamate 87–aspartate 90 is cleaved from the precursor. At glutamine 91 the chain carries Pyrrolidone carboxylic acid. At phenylalanine 97 the chain carries Phenylalanine amide. Positions glutamate 100–aspartate 103 are excised as a propeptide. Glutamine 104 is modified (pyrrolidone carboxylic acid). The residue at position 110 (phenylalanine 110) is a Phenylalanine amide. A propeptide spanning residues aspartate 113–asparagine 116 is cleaved from the precursor. A Pyrrolidone carboxylic acid modification is found at glutamine 117. Phenylalanine 123 is modified (phenylalanine amide). A propeptide spanning residues glutamate 126–aspartate 129 is cleaved from the precursor. Residue glutamine 130 is modified to Pyrrolidone carboxylic acid. Residue phenylalanine 136 is modified to Phenylalanine amide. The propeptide occupies glutamate 139–asparagine 142. Glutamine 143 is modified (pyrrolidone carboxylic acid). Phenylalanine 149 bears the Phenylalanine amide mark. Residues glutamate 152 to aspartate 168 constitute a propeptide that is removed on maturation. Pyrrolidone carboxylic acid is present on glutamine 169. Residue phenylalanine 175 is modified to Phenylalanine amide. A propeptide spanning residues glutamate 178 to lysine 181 is cleaved from the precursor. The residue at position 182 (glutamine 182) is a Pyrrolidone carboxylic acid. At phenylalanine 188 the chain carries Phenylalanine amide. The propeptide occupies aspartate 192–asparagine 194. A Pyrrolidone carboxylic acid modification is found at glutamine 195. At histidine 201 the chain carries Histidine amide. The propeptide occupies glutamate 204 to aspartate 207. Pyrrolidone carboxylic acid is present on glutamine 208. The residue at position 214 (phenylalanine 214) is a Phenylalanine amide. A propeptide spanning residues glutamine 217–aspartate 220 is cleaved from the precursor. Glutamine 221 carries the post-translational modification Pyrrolidone carboxylic acid. Phenylalanine 227 bears the Phenylalanine amide mark. Residues arginine 229–lysine 267 form a disordered region. The propeptide occupies glutamate 230–valine 287. Over residues proline 238 to proline 257 the composition is skewed to polar residues.

This sequence belongs to the FARP (FMRFamide related peptide) family. Post-translationally, the N-terminal processing sites of the Pol-RFamide peptides are acidic suggesting that cniderian nervous systems may use a variety of unconventional processing procedures.

It is found in the secreted. Has direct action on motoneurons, and effect includes transient inhibition followed by prolonged excitation. This Polyorchis penicillatus (Hydromedusa) protein is Pol-RFamide neuropeptides.